A 590-amino-acid chain; its full sequence is Aspartate--tRNA(Asp/Asn) ligase (590 aa).

Glutamate 178 lines the L-aspartate pocket. The segment at 202–205 is aspartate; sequence QIYK. Arginine 224 provides a ligand contact to L-aspartate. ATP contacts are provided by residues 224 to 226 and glutamine 233; that span reads RDE. Histidine 453 lines the L-aspartate pocket. Glutamate 487 is a binding site for ATP. Arginine 494 contacts L-aspartate. 539–542 contacts ATP; it reads GLDR.

Belongs to the class-II aminoacyl-tRNA synthetase family. Type 1 subfamily. As to quaternary structure, homodimer.

The protein localises to the cytoplasm. The enzyme catalyses tRNA(Asx) + L-aspartate + ATP = L-aspartyl-tRNA(Asx) + AMP + diphosphate. Functionally, aspartyl-tRNA synthetase with relaxed tRNA specificity since it is able to aspartylate not only its cognate tRNA(Asp) but also tRNA(Asn). Reaction proceeds in two steps: L-aspartate is first activated by ATP to form Asp-AMP and then transferred to the acceptor end of tRNA(Asp/Asn). This is Aspartate--tRNA(Asp/Asn) ligase from Treponema denticola (strain ATCC 35405 / DSM 14222 / CIP 103919 / JCM 8153 / KCTC 15104).